Reading from the N-terminus, the 65-residue chain is Large ribosomal subunit protein bL35 (65 aa).

This sequence belongs to the bacterial ribosomal protein bL35 family.

The chain is Large ribosomal subunit protein bL35 from Borrelia turicatae (strain 91E135).